We begin with the raw amino-acid sequence, 207 residues long: Ribosomal RNA small subunit methyltransferase G (207 aa).

S-adenosyl-L-methionine contacts are provided by residues Gly-73, Leu-78, 124 to 125, and Arg-139; that span reads VE.

It belongs to the methyltransferase superfamily. RNA methyltransferase RsmG family.

The protein resides in the cytoplasm. It catalyses the reaction guanosine(527) in 16S rRNA + S-adenosyl-L-methionine = N(7)-methylguanosine(527) in 16S rRNA + S-adenosyl-L-homocysteine. In terms of biological role, specifically methylates the N7 position of guanine in position 527 of 16S rRNA. The protein is Ribosomal RNA small subunit methyltransferase G of Enterobacter sp. (strain 638).